The chain runs to 253 residues: Methionine aminopeptidase A (253 aa).

A substrate-binding site is contributed by histidine 80. A divalent metal cation-binding residues include aspartate 98, aspartate 109, and histidine 172. Histidine 179 contributes to the substrate binding site. 2 residues coordinate a divalent metal cation: glutamate 205 and glutamate 236.

The protein belongs to the peptidase M24A family. Methionine aminopeptidase type 1 subfamily. In terms of assembly, monomer. The cofactor is Co(2+). It depends on Zn(2+) as a cofactor. Mn(2+) is required as a cofactor. Fe(2+) serves as cofactor.

It catalyses the reaction Release of N-terminal amino acids, preferentially methionine, from peptides and arylamides.. Its function is as follows. Removes the N-terminal methionine from nascent proteins. The N-terminal methionine is often cleaved when the second residue in the primary sequence is small and uncharged (Met-Ala-, Cys, Gly, Pro, Ser, Thr, or Val). Requires deformylation of the N(alpha)-formylated initiator methionine before it can be hydrolyzed. The polypeptide is Methionine aminopeptidase A (Synechocystis sp. (strain ATCC 27184 / PCC 6803 / Kazusa)).